Here is a 928-residue protein sequence, read N- to C-terminus: DNA polymerase I (928 aa).

The 323-residue stretch at 1–323 (MVQIPQNPLI…ADEAPEVTAT (323 aa)) folds into the 5'-3' exonuclease domain. Residues 324 to 517 (VISYDNYVTI…LHLKMWPDLQ (194 aa)) form the 3'-5' exonuclease domain. Positions 324–928 (VISYDNYVTI…GSGENWDQAH (605 aa)) are klenow fragment. The tract at residues 521-928 (GPLNVFENIE…GSGENWDQAH (408 aa)) is polymerase.

This sequence belongs to the DNA polymerase type-A family. As to quaternary structure, single-chain monomer with multiple functions.

The enzyme catalyses DNA(n) + a 2'-deoxyribonucleoside 5'-triphosphate = DNA(n+1) + diphosphate. In terms of biological role, in addition to polymerase activity, this DNA polymerase exhibits 3'-5' and 5'-3' exonuclease activity. It is able to utilize nicked circular duplex DNA as a template and can unwind the parental DNA strand from its template. Functionally, genetic interactions among priB, dam, lexA, nagC, polA, rdgB, rdgB, rep and uup link the PriA-PriB replication restart pathway to DNA double-strand break repair. The sequence is that of DNA polymerase I (polA) from Escherichia coli (strain K12).